Consider the following 336-residue polypeptide: TBC1 domain family member 21 (336 aa).

Residues 57–265 (GLHPFVRTEA…RLWEVLLTGK (209 aa)) form the Rab-GAP TBC domain.

Interacts with ACTB. Interacts with ARMC12. Interacts with TOMM20 and DNAH7. Interacts with RAP1A. Interacts with RAB10. In terms of tissue distribution, expressed in testis, specifically in elongating and elongated spermatids (at protein level). Expressed in the sperm midpiece (at protein level).

It is found in the cytoplasmic vesicle. The protein localises to the secretory vesicle. It localises to the acrosome. Its subcellular location is the cytoplasm. The protein resides in the cytoskeleton. Acts as a GTPase-activating protein for Rab family protein (s). Essential for the establishment of male fertility, and is required for both the production of normal sperm number and sperm function. Plays an important role in the formation of intact mitochondria, outer dense fibers and axoneme within the sperm tail. Essential for sperm mitochondrial sheath formation and for the interactions of ARMC12 with VDAC2 and VDAC3. May be involved in acrosome formation and cytoskeletal reorganization during spermiogenesis, possibly by regulating RAB3A activity. In Mus musculus (Mouse), this protein is TBC1 domain family member 21.